The primary structure comprises 251 residues: Flap endonuclease Xni (251 aa).

D104 is a binding site for Mg(2+). Residues 160–249 enclose the 5'-3' exonuclease domain; that stretch reads VSPGQLADFW…LDGNLQQLRL (90 aa). Positions 171, 172, 180, 182, and 185 each coordinate K(+). Residues 184-189 form an interaction with DNA region; the sequence is GIGPKS.

The protein belongs to the Xni family. Mg(2+) serves as cofactor. Requires K(+) as cofactor.

Its function is as follows. Has flap endonuclease activity. During DNA replication, flap endonucleases cleave the 5'-overhanging flap structure that is generated by displacement synthesis when DNA polymerase encounters the 5'-end of a downstream Okazaki fragment. This chain is Flap endonuclease Xni, found in Cronobacter sakazakii (strain ATCC BAA-894) (Enterobacter sakazakii).